A 129-amino-acid chain; its full sequence is Ribosome-binding factor A (129 aa).

It belongs to the RbfA family. Monomer. Binds 30S ribosomal subunits, but not 50S ribosomal subunits or 70S ribosomes.

The protein resides in the cytoplasm. Functionally, one of several proteins that assist in the late maturation steps of the functional core of the 30S ribosomal subunit. Associates with free 30S ribosomal subunits (but not with 30S subunits that are part of 70S ribosomes or polysomes). Required for efficient processing of 16S rRNA. May interact with the 5'-terminal helix region of 16S rRNA. The protein is Ribosome-binding factor A of Actinobacillus succinogenes (strain ATCC 55618 / DSM 22257 / CCUG 43843 / 130Z).